A 101-amino-acid polypeptide reads, in one-letter code: Toxin Tpa8 (101 aa).

The first 20 residues, 1 to 20, serve as a signal peptide directing secretion; that stretch reads MVKSEMKLVIFSLFLLLIGV. Positions 24 to 98 constitute an LCN-type CS-alpha/beta domain; sequence KNGYPVIEGG…VMDRTKEYCE (75 aa). Intrachain disulfides connect Cys44–Cys70, Cys56–Cys75, Cys60–Cys77, and Cys71–Cys97.

The protein belongs to the long (4 C-C) scorpion toxin superfamily. Sodium channel inhibitor family. Beta subfamily. Expressed by the venom gland.

It is found in the secreted. Functionally, excitatory insect beta-toxins induce a spastic paralysis. They bind voltage-independently at site-4 of sodium channels (Nav) and shift the voltage of activation toward more negative potentials thereby affecting sodium channel activation and promoting spontaneous and repetitive firing. The sequence is that of Toxin Tpa8 from Tityus pachyurus (Colombian scorpion).